Reading from the N-terminus, the 193-residue chain is Putative protein-glutamate methylesterase/protein-glutamine glutaminase (193 aa).

The CheB-type methylesterase domain occupies 1 to 179 (MNYEAIVIGV…DYVLSLEKIA (179 aa)). Residues Ser-11, His-38, and Asp-131 contribute to the active site.

It belongs to the CheB family.

The protein localises to the cytoplasm. The catalysed reaction is [protein]-L-glutamate 5-O-methyl ester + H2O = L-glutamyl-[protein] + methanol + H(+). The enzyme catalyses L-glutaminyl-[protein] + H2O = L-glutamyl-[protein] + NH4(+). In terms of biological role, may be involved in chemotaxis. The sequence is that of Putative protein-glutamate methylesterase/protein-glutamine glutaminase (cheB2) from Leptospira interrogans serogroup Icterohaemorrhagiae serovar copenhageni (strain Fiocruz L1-130).